Reading from the N-terminus, the 122-residue chain is Small ribosomal subunit protein uS13 (122 aa).

The segment at 95–122 (GLPVRGQRTHTNARTRKGPAKPIAGKKK) is disordered.

The protein belongs to the universal ribosomal protein uS13 family. As to quaternary structure, part of the 30S ribosomal subunit. Forms a loose heterodimer with protein S19. Forms two bridges to the 50S subunit in the 70S ribosome.

Its function is as follows. Located at the top of the head of the 30S subunit, it contacts several helices of the 16S rRNA. In the 70S ribosome it contacts the 23S rRNA (bridge B1a) and protein L5 of the 50S subunit (bridge B1b), connecting the 2 subunits; these bridges are implicated in subunit movement. Contacts the tRNAs in the A and P-sites. In Xanthobacter autotrophicus (strain ATCC BAA-1158 / Py2), this protein is Small ribosomal subunit protein uS13.